A 403-amino-acid polypeptide reads, in one-letter code: Phosphoglycerate kinase (403 aa).

Substrate is bound by residues 22 to 24 (DLN), Arg37, 60 to 63 (HLGR), Arg119, and Arg156. Residues Lys206, Gly302, Glu333, and 359-362 (GGDS) each bind ATP.

Belongs to the phosphoglycerate kinase family. In terms of assembly, monomer.

The protein localises to the cytoplasm. It catalyses the reaction (2R)-3-phosphoglycerate + ATP = (2R)-3-phospho-glyceroyl phosphate + ADP. It functions in the pathway carbohydrate degradation; glycolysis; pyruvate from D-glyceraldehyde 3-phosphate: step 2/5. This is Phosphoglycerate kinase from Streptomyces avermitilis (strain ATCC 31267 / DSM 46492 / JCM 5070 / NBRC 14893 / NCIMB 12804 / NRRL 8165 / MA-4680).